The primary structure comprises 367 residues: 3-dehydroquinate synthase (367 aa).

NAD(+) contacts are provided by residues 69-74 (DGEAFK), 103-107 (GVIGD), 127-128 (TT), lysine 140, and lysine 149. Zn(2+) contacts are provided by glutamate 182, histidine 245, and histidine 262.

It belongs to the sugar phosphate cyclases superfamily. Dehydroquinate synthase family. Co(2+) serves as cofactor. Requires Zn(2+) as cofactor. NAD(+) is required as a cofactor.

It is found in the cytoplasm. It carries out the reaction 7-phospho-2-dehydro-3-deoxy-D-arabino-heptonate = 3-dehydroquinate + phosphate. The protein operates within metabolic intermediate biosynthesis; chorismate biosynthesis; chorismate from D-erythrose 4-phosphate and phosphoenolpyruvate: step 2/7. In terms of biological role, catalyzes the conversion of 3-deoxy-D-arabino-heptulosonate 7-phosphate (DAHP) to dehydroquinate (DHQ). The protein is 3-dehydroquinate synthase of Pseudomonas syringae pv. syringae (strain B728a).